The chain runs to 65 residues: Translational regulator CsrA (65 aa).

The protein belongs to the CsrA/RsmA family. As to quaternary structure, homodimer; the beta-strands of each monomer intercalate to form a hydrophobic core, while the alpha-helices form wings that extend away from the core.

The protein localises to the cytoplasm. Functionally, a translational regulator that binds mRNA to regulate translation initiation and/or mRNA stability. Usually binds in the 5'-UTR at or near the Shine-Dalgarno sequence preventing ribosome-binding, thus repressing translation. Its main target seems to be the major flagellin gene, while its function is anatagonized by FliW. The sequence is that of Translational regulator CsrA from Bordetella petrii (strain ATCC BAA-461 / DSM 12804 / CCUG 43448).